Consider the following 358-residue polypeptide: Beta-lactamase (358 aa).

Ser-60 (acyl-ester intermediate) is an active-site residue. Tyr-146 functions as the Proton acceptor in the catalytic mechanism. 311 to 313 is a binding site for substrate; sequence KTG.

It belongs to the class-C beta-lactamase family.

Its subcellular location is the periplasm. The enzyme catalyses a beta-lactam + H2O = a substituted beta-amino acid. Its function is as follows. This protein is a serine beta-lactamase with a substrate specificity for cephalosporins. The chain is Beta-lactamase from Pseudomonas fluorescens.